Reading from the N-terminus, the 337-residue chain is Ribosomal RNA small subunit methyltransferase C (337 aa).

Belongs to the methyltransferase superfamily. RsmC family. Monomer.

It localises to the cytoplasm. The catalysed reaction is guanosine(1207) in 16S rRNA + S-adenosyl-L-methionine = N(2)-methylguanosine(1207) in 16S rRNA + S-adenosyl-L-homocysteine + H(+). Functionally, specifically methylates the guanine in position 1207 of 16S rRNA in the 30S particle. The sequence is that of Ribosomal RNA small subunit methyltransferase C from Acinetobacter baumannii (strain ATCC 17978 / DSM 105126 / CIP 53.77 / LMG 1025 / NCDC KC755 / 5377).